The primary structure comprises 159 residues: Large ribosomal subunit protein eL24 (159 aa).

The disordered stretch occupies residues 118–159; it reads ANKAVRAAKAAANKEKKASQPKTQQKTAKNVKTAAPRVGGKR. The segment covering 137–147 has biased composition (polar residues); it reads QPKTQQKTAKN.

Belongs to the eukaryotic ribosomal protein eL24 family.

The chain is Large ribosomal subunit protein eL24 from Caenorhabditis elegans.